Consider the following 612-residue polypeptide: Zinc metalloproteinase-disintegrin-like HV1 (612 aa).

A signal peptide spans 1-20 (MIQVLLVTICLAVFPYQGSS). A propeptide spanning residues 21 to 188 (IILESGNVND…SIKEDSQSNL (168 aa)) is cleaved from the precursor. Residues 200 to 396 (KYVKFFLVAD…NMPQCILKKP (197 aa)) form the Peptidase M12B domain. The N-linked (GlcNAc...) asparagine glycan is linked to Asn219. 3 disulfide bridges follow: Cys311/Cys391, Cys351/Cys375, and Cys353/Cys358. Zn(2+) is bound at residue His336. The active site involves Glu337. Zn(2+)-binding residues include His340 and His346. In terms of domain architecture, Disintegrin spans 404-489 (PPVCGNYFVE…AECTDRFQRN (86 aa)). Ca(2+)-binding residues include Val406, Asn409, Phe411, Glu413, Glu416, and Asp419. Disulfide bonds link Cys407-Cys436, Cys418-Cys431, Cys420-Cys426, Cys430-Cys453, Cys444-Cys450, Cys449-Cys475, Cys462-Cys482, Cys469-Cys500, Cys493-Cys505, Cys512-Cys562, Cys527-Cys573, Cys540-Cys550, Cys557-Cys599, and Cys593-Cys605. The short motif at 468-470 (ECD) is the D/ECD-tripeptide element. Residues Asp470, Met471, Asp473, Asp484, and Arg485 each contribute to the Ca(2+) site. Asn502 carries N-linked (GlcNAc...) asparagine glycosylation. A glycan (N-linked (GlcNAc...) asparagine) is linked at Asn609.

It belongs to the venom metalloproteinase (M12B) family. P-III subfamily. P-IIIc sub-subfamily. Homodimer; disulfide-linked. Requires Zn(2+) as cofactor. As to expression, expressed by the venom gland.

It is found in the secreted. With respect to regulation, inhibited by EDTA and EGTA. Snake venom zinc metalloproteinase-disintegrin-like that potently activates prothrombin (F2). Does not elicit any hemorrhagic response. Barely inhibits collagen-induced platelet aggregation. Hydrolyzes the alpha-chain of fibrin and fibrinogen (FGA), without affecting the Bbeta- and gamma-chains. Induces apoptosis in cultured vascular endothelial cells. In Protobothrops flavoviridis (Habu), this protein is Zinc metalloproteinase-disintegrin-like HV1.